Consider the following 862-residue polypeptide: Dipeptidyl peptidase 9 (862 aa).

Residues Ser729, Asp807, and His839 each act as charge relay system in the active site. Val-boroPro is bound at residue Ser729.

It belongs to the peptidase S9B family. DPPIV subfamily. In terms of assembly, homodimer. Forms a ternary complex with NLRP1, composed of a DPP9 homodimer, one full-length NLRP1 protein, and one cleaved C-terminus of NLRP1 (NACHT, LRR and PYD domains-containing protein 1, C-terminus). Forms a ternary complex with CARD8, composed of a DPP9 homodimer, one full-length NLRP1 protein, and one cleaved C-terminus of CARD8 (Caspase recruitment domain-containing protein 8, C-terminus). In the ternary complex, only one subunit of the DPP9 homodimer is bound to NLRP1 or CARD8. As to expression, detected in kidney, skin, brain, thymus and liver (at protein level).

It localises to the cytoplasm. The protein resides in the cytosol. The catalysed reaction is Release of an N-terminal dipeptide, Xaa-Yaa-|-Zaa-, from a polypeptide, preferentially when Yaa is Pro, provided Zaa is neither Pro nor hydroxyproline.. With respect to regulation, inhibited by the serine proteinase inhibitor 4-(2-aminoethyl)benzenesulphonyl fluoride (AEBSF), and by di-isopropylfluorophosphate. Inhibited by Val-boroPro (Talabostat, PT-100), a non-selective inhibitor, which triggers pyroptosis in monocytes and macrophages. Val-boroPro inhibits activity by binding to the active site, mimicking a substrate-bound state, thereby displacing the C-terminal fragment of NLRP1, leading to activation of the NLRP1 inflammasome. In contrast, Val-boroPro does not directly displaces CARD8: it acts by promoting degradation of the N-terminal part of CARD8, leading to indirect disruption of the ternary complex. Its function is as follows. Dipeptidyl peptidase that cleaves off N-terminal dipeptides from proteins having a Pro or Ala residue at position 2. Acts as a key inhibitor of caspase-1-dependent monocyte and macrophage pyroptosis in resting cells by preventing activation of NLRP1 and CARD8. Sequesters the cleaved C-terminal part of NLRP1 and CARD8, which respectively constitute the active part of the NLRP1 and CARD8 inflammasomes, in a ternary complex, thereby preventing their oligomerization and activation. The dipeptidyl peptidase activity is required to suppress NLRP1 and CARD8; however, neither NLRP1 nor CARD8 are bona fide substrates of DPP9, suggesting the existence of substrate(s) required for NLRP1 and CARD8 inhibition. This chain is Dipeptidyl peptidase 9, found in Mus musculus (Mouse).